The primary structure comprises 237 residues: 7-cyano-7-deazaguanine synthase (237 aa).

An ATP-binding site is contributed by Tyr9 to Leu19. 4 residues coordinate Zn(2+): Cys189, Cys199, Cys202, and Cys205.

It belongs to the QueC family. Zn(2+) is required as a cofactor.

It catalyses the reaction 7-carboxy-7-deazaguanine + NH4(+) + ATP = 7-cyano-7-deazaguanine + ADP + phosphate + H2O + H(+). Its pathway is purine metabolism; 7-cyano-7-deazaguanine biosynthesis. Catalyzes the ATP-dependent conversion of 7-carboxy-7-deazaguanine (CDG) to 7-cyano-7-deazaguanine (preQ(0)). The polypeptide is 7-cyano-7-deazaguanine synthase (Geobacter metallireducens (strain ATCC 53774 / DSM 7210 / GS-15)).